We begin with the raw amino-acid sequence, 245 residues long: Demethylmenaquinone methyltransferase (245 aa).

S-adenosyl-L-methionine contacts are provided by residues T70, D90, and 118–119 (DC).

Belongs to the class I-like SAM-binding methyltransferase superfamily. MenG/UbiE family.

It catalyses the reaction a 2-demethylmenaquinol + S-adenosyl-L-methionine = a menaquinol + S-adenosyl-L-homocysteine + H(+). The protein operates within quinol/quinone metabolism; menaquinone biosynthesis; menaquinol from 1,4-dihydroxy-2-naphthoate: step 2/2. Its function is as follows. Methyltransferase required for the conversion of demethylmenaquinol (DMKH2) to menaquinol (MKH2). The chain is Demethylmenaquinone methyltransferase from Bacteroides fragilis (strain ATCC 25285 / DSM 2151 / CCUG 4856 / JCM 11019 / LMG 10263 / NCTC 9343 / Onslow / VPI 2553 / EN-2).